We begin with the raw amino-acid sequence, 638 residues long: Probable glycerol-3-phosphate dehydrogenase, mitochondrial (638 aa).

Position 100 to 128 (100 to 128 (DLIVIGGGATGTGVALDAQSRGMKVALFE)) interacts with FAD.

The protein belongs to the FAD-dependent glycerol-3-phosphate dehydrogenase family. FAD serves as cofactor.

The protein resides in the mitochondrion. The enzyme catalyses a quinone + sn-glycerol 3-phosphate = dihydroxyacetone phosphate + a quinol. Its pathway is polyol metabolism; glycerol degradation via glycerol kinase pathway; glycerone phosphate from sn-glycerol 3-phosphate (anaerobic route): step 1/1. The protein is Probable glycerol-3-phosphate dehydrogenase, mitochondrial of Dictyostelium discoideum (Social amoeba).